A 395-amino-acid polypeptide reads, in one-letter code: Dual specificity protein phosphatase 4 (395 aa).

At Val-2 the chain carries N-acetylvaline. The Rhodanese domain occupies 42-160; sequence SGGKCLLLDC…FSSEYPEFCS (119 aa). The region spanning 196 to 337 is the Tyrosine-protein phosphatase domain; sequence GPVEILPFLY…LLQFESQVLT (142 aa). Cys-281 serves as the catalytic Phosphocysteine intermediate. Phosphoserine; by MAPK occurs at positions 387 and 392.

Belongs to the protein-tyrosine phosphatase family. Non-receptor class dual specificity subfamily. As to quaternary structure, hollow spherical complex composed of 24 subunits with pseudooctahedral symmetry, has a tetramer as the basic unit. Phosphorylation in the C-terminus by ERK1/2 inhibits proteasomal degradation and stabilizes the protein. In terms of tissue distribution, expressed at moderate levels in nearly all tissues and cells including brain, spleen, and testes with the higher expression in the heart and lung and lower expression in skeletal muscle and kidney. Undetectable in liver. Expressed in many areas of the brain with very strong expression in the hippocampus, piriform cortex, and the suprachiasmatic nucleus.

Its subcellular location is the nucleus. The enzyme catalyses O-phospho-L-tyrosyl-[protein] + H2O = L-tyrosyl-[protein] + phosphate. It carries out the reaction O-phospho-L-seryl-[protein] + H2O = L-seryl-[protein] + phosphate. It catalyses the reaction O-phospho-L-threonyl-[protein] + H2O = L-threonyl-[protein] + phosphate. Regulates mitogenic signal transduction by dephosphorylating both Thr and Tyr residues on MAP kinases ERK1 and ERK2. The chain is Dual specificity protein phosphatase 4 (Dusp4) from Rattus norvegicus (Rat).